A 284-amino-acid chain; its full sequence is 2-dehydro-3-deoxyphosphooctonate aldolase (284 aa).

It belongs to the KdsA family.

The protein localises to the cytoplasm. The catalysed reaction is D-arabinose 5-phosphate + phosphoenolpyruvate + H2O = 3-deoxy-alpha-D-manno-2-octulosonate-8-phosphate + phosphate. Its pathway is carbohydrate biosynthesis; 3-deoxy-D-manno-octulosonate biosynthesis; 3-deoxy-D-manno-octulosonate from D-ribulose 5-phosphate: step 2/3. It functions in the pathway bacterial outer membrane biogenesis; lipopolysaccharide biosynthesis. This Histophilus somni (strain 2336) (Haemophilus somnus) protein is 2-dehydro-3-deoxyphosphooctonate aldolase.